Consider the following 331-residue polypeptide: Phosphoribosylformylglycinamidine cyclo-ligase (331 aa).

This sequence belongs to the AIR synthase family.

Its subcellular location is the cytoplasm. The enzyme catalyses 2-formamido-N(1)-(5-O-phospho-beta-D-ribosyl)acetamidine + ATP = 5-amino-1-(5-phospho-beta-D-ribosyl)imidazole + ADP + phosphate + H(+). It participates in purine metabolism; IMP biosynthesis via de novo pathway; 5-amino-1-(5-phospho-D-ribosyl)imidazole from N(2)-formyl-N(1)-(5-phospho-D-ribosyl)glycinamide: step 2/2. The protein is Phosphoribosylformylglycinamidine cyclo-ligase of Clostridium tetani (strain Massachusetts / E88).